A 279-amino-acid polypeptide reads, in one-letter code: Pantothenate synthetase (279 aa).

26-33 (MGNLHEGH) lines the ATP pocket. The active-site Proton donor is the H33. (R)-pantoate is bound at residue Q57. Q57 provides a ligand contact to beta-alanine. 144 to 147 (GKKD) is an ATP binding site. (R)-pantoate is bound at residue Q150. ATP is bound by residues V173 and 181–184 (LSSR).

It belongs to the pantothenate synthetase family. As to quaternary structure, homodimer.

Its subcellular location is the cytoplasm. It carries out the reaction (R)-pantoate + beta-alanine + ATP = (R)-pantothenate + AMP + diphosphate + H(+). The protein operates within cofactor biosynthesis; (R)-pantothenate biosynthesis; (R)-pantothenate from (R)-pantoate and beta-alanine: step 1/1. Its function is as follows. Catalyzes the condensation of pantoate with beta-alanine in an ATP-dependent reaction via a pantoyl-adenylate intermediate. In Burkholderia cenocepacia (strain ATCC BAA-245 / DSM 16553 / LMG 16656 / NCTC 13227 / J2315 / CF5610) (Burkholderia cepacia (strain J2315)), this protein is Pantothenate synthetase.